We begin with the raw amino-acid sequence, 215 residues long: Pyrrolidone-carboxylate peptidase (215 aa).

Catalysis depends on residues Glu-80, Cys-143, and His-167.

This sequence belongs to the peptidase C15 family. Homotetramer.

It is found in the cytoplasm. It carries out the reaction Release of an N-terminal pyroglutamyl group from a polypeptide, the second amino acid generally not being Pro.. In terms of biological role, removes 5-oxoproline from various penultimate amino acid residues except L-proline. The protein is Pyrrolidone-carboxylate peptidase of Yersinia pseudotuberculosis serotype O:1b (strain IP 31758).